Reading from the N-terminus, the 406-residue chain is Vacuole membrane protein 1 (406 aa).

Residues 1–22 (MAENGTDCEQRRVGMPKEQNNG) are disordered. Topologically, residues 1 to 42 (MAENGTDCEQRRVGMPKEQNNGSFQDPSFMCNRKRRDREERQ) are cytoplasmic. Residues 43–63 (SIVLWRKPLITLQYFILEVLI) traverse the membrane as a helical segment. Over 64-76 (NLKEWSVRLWHRR) the chain is Extracellular. A helical transmembrane segment spans residues 77–97 (MMVVSVLLLLAVLSVAYYIEG). Topologically, residues 98 to 110 (EHQQCVQYIEKKC) are cytoplasmic. A helical transmembrane segment spans residues 111–131 (LWCAYWVGLGILSSVGLGTGL). Residues 132-250 (HTFLLYLGPH…ATRAKLTVQN (119 aa)) lie on the Extracellular side of the membrane. Positions 173–316 (GTEGAISLWT…FVIITFSKHI (144 aa)) are VTT domain. Residues 251–271 (LVQKVGFLGILACASIPNPLF) traverse the membrane as a helical segment. Residues 272–273 (DL) lie on the Cytoplasmic side of the membrane. Residues 274-294 (AGITCGHFLVPFWTFFGATLI) traverse the membrane as a helical segment. Residues 295–306 (GKAIIKMHIQKL) lie on the Extracellular side of the membrane. A helical membrane pass occupies residues 307–327 (FVIITFSKHIVEQMVSLIGVI). The Cytoplasmic segment spans residues 328–363 (PSIGPSLQKPFQEYLEAQRKKLHHKGDSGTPQSENW). Residues 364–384 (LSWAFEKLVIIMVFYFILSII) traverse the membrane as a helical segment. Residues 385-406 (NSMAQSYAKRVQQKKLSVEKTK) lie on the Extracellular side of the membrane.

The protein belongs to the VMP1 family.

The protein localises to the endoplasmic reticulum-Golgi intermediate compartment membrane. The protein resides in the cell membrane. Its subcellular location is the vacuole membrane. It localises to the endoplasmic reticulum membrane. It catalyses the reaction a 1,2-diacyl-sn-glycero-3-phospho-L-serine(in) = a 1,2-diacyl-sn-glycero-3-phospho-L-serine(out). The catalysed reaction is cholesterol(in) = cholesterol(out). It carries out the reaction a 1,2-diacyl-sn-glycero-3-phosphocholine(in) = a 1,2-diacyl-sn-glycero-3-phosphocholine(out). The enzyme catalyses a 1,2-diacyl-sn-glycero-3-phosphoethanolamine(in) = a 1,2-diacyl-sn-glycero-3-phosphoethanolamine(out). Its function is as follows. Phospholipid scramblase involved in lipid homeostasis and membrane dynamics processes. Has phospholipid scramblase activity toward cholesterol and phosphatidylserine, as well as phosphatidylethanolamine and phosphatidylcholine. Required for autophagosome formation: participates in early stages of autophagosome biogenesis at the endoplasmic reticulum (ER) membrane by reequilibrating the leaflets of the ER as lipids are extracted by atg2 (atg2a or atg2b) to mediate autophagosome assembly. In addition to autophagy, involved in other processes in which phospholipid scramblase activity is required. Modulates ER contacts with lipid droplets, mitochondria and endosomes. The chain is Vacuole membrane protein 1 from Xenopus laevis (African clawed frog).